We begin with the raw amino-acid sequence, 104 residues long: Large ribosomal subunit protein bL21 (104 aa).

It belongs to the bacterial ribosomal protein bL21 family. Part of the 50S ribosomal subunit. Contacts protein L20.

In terms of biological role, this protein binds to 23S rRNA in the presence of protein L20. The polypeptide is Large ribosomal subunit protein bL21 (Symbiobacterium thermophilum (strain DSM 24528 / JCM 14929 / IAM 14863 / T)).